Consider the following 1795-residue polypeptide: Type III effector AvrE (1795 aa).

Residues 1–18 (MQSPSIHRNTGSIIQPTV) show a composition bias toward polar residues. A disordered region spans residues 1–227 (MQSPSIHRNT…PPREPMLWRS (227 aa)). Residues 60–75 (KSKAPQQKAATPPTAK) show a composition bias toward low complexity. Polar residues-rich tracts occupy residues 97–109 (GFSN…THSA) and 117–127 (HPNQASSSGAQ). Over residues 129 to 154 (HEIHPEAAPRKNLRVRFDLPQDRLER) the composition is skewed to basic and acidic residues. The segment covering 174–191 (ATRQFRSPDSHLQGSDGT) has biased composition (polar residues). Low complexity predominate over residues 203–215 (PSSSGSKIGDSDG). 2 short sequence motifs (wxxxE) span residues 393–397 (WKIPE) and 829–833 (WQRFE). A disordered region spans residues 1461–1488 (QIGGSHTAPTGTPASAPGPTPASQTAAN). Low complexity predominate over residues 1467 to 1487 (TAPTGTPASAPGPTPASQTAA). The ERMRS signature appears at 1787–1790 (KKEG).

It belongs to the AvrE family. As to quaternary structure, in planta interaction assays, interacts with the A.thaliana protein phosphatase 2A (PP2A) via direct interaction/association with specific B' regulatory subunits.

The protein localises to the secreted. It localises to the host cell. Its subcellular location is the host cell membrane. Its activity is regulated as follows. Polyamidoamine dendrimers inhibit channel and virulence activities. Functionally, major virulence factor that may function as a water- and solute-permeable channel dedicated to creating osmotic/water potential perturbation and a water- and nutrient-rich apoplast in which bacteria multiply within the infected plant tissues. Expression in Xenopus oocytes results in inward and outward currents, permeability to water and osmolarity-dependent oocyte swelling and bursting. Its function is as follows. Elicits cell death in host tomato leaves and in non-host Nicotiana tabacum leaves. Acts within plant cells and promotes lesion formation. The combined action of AvrE and HopM1 is particularly important in promoting bacterial growth in plants. Contributes to the down-regulation of a specific subset of A.thaliana genes during infection, including NHL13, which is required for antibacterial immunity. This is Type III effector AvrE from Pseudomonas syringae pv. tomato (strain ATCC BAA-871 / DC3000).